Consider the following 162-residue polypeptide: Interleukin-15 (162 aa).

An N-terminal signal peptide occupies residues 1-29; sequence MRISKPHLRITSIQCYVCLLLNTHFLTEA. Positions 30–48 are excised as a propeptide; it reads GIRVFILGCISAGIPKTEA. Disulfide bonds link C83–C133 and C90–C136. Residues N119, N127, and N143 are each glycosylated (N-linked (GlcNAc...) asparagine).

This sequence belongs to the IL-15/IL-21 family.

It is found in the secreted. Functionally, cytokine that plays a major role in the development of inflammatory and protective immune responses to microbial invaders and parasites by modulating immune cells of both the innate and adaptive immune systems. Stimulates the proliferation of natural killer cells, T-cells and B-cells and promotes the secretion of several cytokines. In monocytes, induces the production of IL8 and monocyte chemotactic protein 1/CCL2, two chemokines that attract neutrophils and monocytes respectively to sites of infection. Unlike most cytokines, which are secreted in soluble form, IL15 is expressed in association with its high affinity IL15RA on the surface of IL15-producing cells and delivers signals to target cells that express IL2RB and IL2RG receptor subunits. Binding to its receptor triggers the phosphorylation of JAK1 and JAK3 and the recruitment and subsequent phosphorylation of signal transducer and activator of transcription-3/STAT3 and STAT5. In mast cells, induces the rapid tyrosine phosphorylation of STAT6 and thereby controls mast cell survival and release of cytokines such as IL4. This Marmota monax (Woodchuck) protein is Interleukin-15 (IL15).